We begin with the raw amino-acid sequence, 333 residues long: UPF0285 protein MTH_1441 (333 aa).

This sequence belongs to the UPF0285 family.

This is UPF0285 protein MTH_1441 from Methanothermobacter thermautotrophicus (strain ATCC 29096 / DSM 1053 / JCM 10044 / NBRC 100330 / Delta H) (Methanobacterium thermoautotrophicum).